The following is a 227-amino-acid chain: 2-C-methyl-D-erythritol 4-phosphate cytidylyltransferase (227 aa).

This sequence belongs to the IspD/TarI cytidylyltransferase family. IspD subfamily.

It catalyses the reaction 2-C-methyl-D-erythritol 4-phosphate + CTP + H(+) = 4-CDP-2-C-methyl-D-erythritol + diphosphate. It participates in isoprenoid biosynthesis; isopentenyl diphosphate biosynthesis via DXP pathway; isopentenyl diphosphate from 1-deoxy-D-xylulose 5-phosphate: step 2/6. Its function is as follows. Catalyzes the formation of 4-diphosphocytidyl-2-C-methyl-D-erythritol from CTP and 2-C-methyl-D-erythritol 4-phosphate (MEP). The protein is 2-C-methyl-D-erythritol 4-phosphate cytidylyltransferase of Nostoc punctiforme (strain ATCC 29133 / PCC 73102).